A 312-amino-acid chain; its full sequence is Ribosomal RNA small subunit methyltransferase H (312 aa).

S-adenosyl-L-methionine is bound by residues 33–35 (GGY), Asp-51, Phe-78, Asp-97, and Gln-104.

Belongs to the methyltransferase superfamily. RsmH family.

It localises to the cytoplasm. It carries out the reaction cytidine(1402) in 16S rRNA + S-adenosyl-L-methionine = N(4)-methylcytidine(1402) in 16S rRNA + S-adenosyl-L-homocysteine + H(+). In terms of biological role, specifically methylates the N4 position of cytidine in position 1402 (C1402) of 16S rRNA. The sequence is that of Ribosomal RNA small subunit methyltransferase H from Orientia tsutsugamushi (strain Ikeda) (Rickettsia tsutsugamushi).